Consider the following 366-residue polypeptide: Putative type II methyltransferase M.MjaORF1200P (366 aa).

Positions Leu5–Lys366 constitute an SAM-dependent MTase C5-type domain. Cys133 is a catalytic residue.

It belongs to the class I-like SAM-binding methyltransferase superfamily. C5-methyltransferase family.

It catalyses the reaction a 2'-deoxycytidine in DNA + S-adenosyl-L-methionine = a 5-methyl-2'-deoxycytidine in DNA + S-adenosyl-L-homocysteine + H(+). Functionally, a putative methylase that probably protects DNA from cleavage by the MjaORF1200P endonuclease. The chain is Putative type II methyltransferase M.MjaORF1200P from Methanocaldococcus jannaschii (strain ATCC 43067 / DSM 2661 / JAL-1 / JCM 10045 / NBRC 100440) (Methanococcus jannaschii).